The following is a 220-amino-acid chain: Splicing factor U2AF 26 kDa subunit (220 aa).

Residue A2 is modified to N-acetylalanine. The C3H1-type 1 zinc finger occupies 12–40 (EKDKVNCSFYFKIGACRHGDRCSRLHNKP). Residues 65-147 (SHCHVSDVEV…QAVHAELSPV (83 aa)) enclose the RRM domain. The C3H1-type 2 zinc finger occupies 149–176 (DFRESCCRQYEMGECTRGGFCNFMHLRP). Residues 186 to 220 (YGRGPRHRSPPRSHTGHRPRERNRRRSPDHRHGRF) form a disordered region. Basic residues predominate over residues 189 to 220 (GPRHRSPPRSHTGHRPRERNRRRSPDHRHGRF).

It belongs to the splicing factor SR family. As to quaternary structure, interacts with GFI1, U2AF2 and C1QBP. Isoform 3 interacts with PER1. Post-translationally, isoform 3 is rapidly degraded by a proteasome-mediated degradation pathway. Ubiquitous. Highly expressed in the brain.

The protein localises to the nucleus. It is found in the nucleus speckle. Its subcellular location is the cytoplasm. Functionally, RNA-binding protein that function as a pre-mRNA splicing factor. Plays a critical role in both constitutive and enhancer-dependent splicing by mediating protein-protein interactions and protein-RNA interactions required for accurate 3'-splice site selection. It can functionally substitute for U2AF1 in constitutive splicing and enhancer-dependent splicing. Acts by enhancing the binding of U2AF2 to weak pyrimidine tracts. Also participates in the regulation of alternative pre-mRNA splicing. Activates exon 5 skipping of PTPRC during T-cell activation; an event reversed by GFI1. Binds to RNA at the AG dinucleotide at the 3'-splice site. Shows a preference for AGC or AGA. Alternative splicing of U2AF1L4 may play a role in connecting the circadian rhythm to changing external cues: may provide a circadian buffering system in central and periphery clocks that allows synchronized adaption to clock-resetting stimuli in order to prevent potentially pathogenic desynchronization. The protein is Splicing factor U2AF 26 kDa subunit (U2af1l4) of Mus musculus (Mouse).